Reading from the N-terminus, the 336-residue chain is Glycerol-3-phosphate dehydrogenase [NAD(P)+] (336 aa).

The NADPH site is built by S14, W15, R35, R36, and K109. K109 and G139 together coordinate sn-glycerol 3-phosphate. A143 is a binding site for NADPH. K194, D247, S257, R258, and N259 together coordinate sn-glycerol 3-phosphate. The active-site Proton acceptor is K194. R258 contributes to the NADPH binding site. E284 lines the NADPH pocket.

It belongs to the NAD-dependent glycerol-3-phosphate dehydrogenase family.

Its subcellular location is the cytoplasm. It catalyses the reaction sn-glycerol 3-phosphate + NAD(+) = dihydroxyacetone phosphate + NADH + H(+). The catalysed reaction is sn-glycerol 3-phosphate + NADP(+) = dihydroxyacetone phosphate + NADPH + H(+). Its pathway is membrane lipid metabolism; glycerophospholipid metabolism. Functionally, catalyzes the reduction of the glycolytic intermediate dihydroxyacetone phosphate (DHAP) to sn-glycerol 3-phosphate (G3P), the key precursor for phospholipid synthesis. The polypeptide is Glycerol-3-phosphate dehydrogenase [NAD(P)+] (Streptomyces coelicolor (strain ATCC BAA-471 / A3(2) / M145)).